Consider the following 384-residue polypeptide: Probable peptidoglycan glycosyltransferase FtsW (384 aa).

The Cytoplasmic segment spans residues 1 to 19; the sequence is MAAVWRWFVPERPSFYDRG. A helical transmembrane segment spans residues 20–40; it reads LLALTFSLMGIGLMMVASASI. Over 41–54 the chain is Periplasmic; the sequence is KEGPGGDMFYFTKR. Residues 55–75 traverse the membrane as a helical segment; it reads HLIFLFVCLGIGVGTLYLPLE. Topologically, residues 76–83 are cytoplasmic; sequence RWREWSGR. The chain crosses the membrane as a helical span at residues 84–104; sequence LLVGALGLLFAVLAVGRTVNG. Over 105–110 the chain is Periplasmic; it reads AKRWIG. A helical membrane pass occupies residues 111–131; the sequence is FGFFNIQPAELAKLALIVFIA. The Cytoplasmic portion of the chain corresponds to 132–143; the sequence is SYLVRRSDEVRG. The chain crosses the membrane as a helical span at residues 144–164; sequence NIAGFVKPLAVVFLLAIMLLA. The Periplasmic segment spans residues 165 to 166; the sequence is QP. Residues 167–187 traverse the membrane as a helical segment; that stretch reads DLGSVVVLFVCTFGLLFIGGA. A topological domain (cytoplasmic) is located at residue lysine 188. A helical membrane pass occupies residues 189-209; sequence LVQFIAIIVAGLSALAGLIIY. Over 210 to 267 the chain is Periplasmic; that stretch reads EPYRLRRVTSFLDPWADPFGSGYQLTQSLMAFGRGGFFGQGLGNSVQKLSYLPEAHTD. The chain crosses the membrane as a helical span at residues 268–288; sequence FVFAILGEELGYFGVLVVLFL. The Cytoplasmic segment spans residues 289-316; the sequence is QLLLAMKALQIGRTALLRSKFFEGYMAC. The helical transmembrane segment at 317–337 threads the bilayer; the sequence is GIGIWFSFQTVVNVGAAAGML. Residues 338 to 343 lie on the Periplasmic side of the membrane; sequence PTKGLT. Residues 344 to 364 traverse the membrane as a helical segment; it reads LPLVSYGGSSLIAITMAVAIL. Over 365–384 the chain is Cytoplasmic; it reads LRIDFERRLDTSHVIQREAA.

The protein belongs to the SEDS family. FtsW subfamily.

The protein resides in the cell inner membrane. It catalyses the reaction [GlcNAc-(1-&gt;4)-Mur2Ac(oyl-L-Ala-gamma-D-Glu-L-Lys-D-Ala-D-Ala)](n)-di-trans,octa-cis-undecaprenyl diphosphate + beta-D-GlcNAc-(1-&gt;4)-Mur2Ac(oyl-L-Ala-gamma-D-Glu-L-Lys-D-Ala-D-Ala)-di-trans,octa-cis-undecaprenyl diphosphate = [GlcNAc-(1-&gt;4)-Mur2Ac(oyl-L-Ala-gamma-D-Glu-L-Lys-D-Ala-D-Ala)](n+1)-di-trans,octa-cis-undecaprenyl diphosphate + di-trans,octa-cis-undecaprenyl diphosphate + H(+). Its pathway is cell wall biogenesis; peptidoglycan biosynthesis. Functionally, peptidoglycan polymerase that is essential for cell division. The chain is Probable peptidoglycan glycosyltransferase FtsW from Tolumonas auensis (strain DSM 9187 / NBRC 110442 / TA 4).